Consider the following 239-residue polypeptide: NADH-quinone oxidoreductase subunit I 1 (239 aa).

4Fe-4S ferredoxin-type domains follow at residues 81–111 (LVPREDGKPRCVACYMCATICPAQCIYIEAA) and 123–152 (AKFVIDELRCIVCGFCVEACPKDAIRMDSG). [4Fe-4S] cluster is bound by residues Cys-91, Cys-94, Cys-97, Cys-101, Cys-132, Cys-135, Cys-138, and Cys-142.

It belongs to the complex I 23 kDa subunit family. NDH-1 is composed of 14 different subunits. Subunits NuoA, H, J, K, L, M, N constitute the membrane sector of the complex. [4Fe-4S] cluster is required as a cofactor.

The protein localises to the cell inner membrane. It catalyses the reaction a quinone + NADH + 5 H(+)(in) = a quinol + NAD(+) + 4 H(+)(out). In terms of biological role, NDH-1 shuttles electrons from NADH, via FMN and iron-sulfur (Fe-S) centers, to quinones in the respiratory chain. The immediate electron acceptor for the enzyme in this species is believed to be ubiquinone. Couples the redox reaction to proton translocation (for every two electrons transferred, four hydrogen ions are translocated across the cytoplasmic membrane), and thus conserves the redox energy in a proton gradient. This Anaeromyxobacter dehalogenans (strain 2CP-C) protein is NADH-quinone oxidoreductase subunit I 1.